Reading from the N-terminus, the 315-residue chain is MINADKPHRWNDDVQASVRLYNQWFLDAAPKAYRDTRQLTIDEVEQAFQRTANMTSITPEVLKAHPKTLATLRMSTAPPIARDRLVGLSHGSKSLLDTMEKGKLPPRMKGDVLDTHLAKMCAVLTDLLDLDLFHWYPTGEPAEPRQRELAATVVADRLCGAIADPIVRNAQERRQLALIEEWLLARGYTKKTHSASLPLNTMQPGTFSFRQNVVVGSDLPVNIPVDAVIQPHTPHSHKLPILIEAKSAGDFTNTNKRRKEEATKIHQLQLKYGNEISLTLFLCGYFNTGYLGYSAAEGLDWVWEHRIDDLEAAGA.

The enzyme catalyses Endonucleolytic cleavage of DNA to give specific double-stranded fragments with terminal 5'-phosphates.. Functionally, a P subtype restriction enzyme that recognizes the double-stranded sequence 5'-GTCGAC-3' and cleaves after G-1. In Streptomyces albus G, this protein is Type II restriction enzyme SalI.